The sequence spans 157 residues: S-ribosylhomocysteine lyase (157 aa).

Histidine 54, histidine 58, and cysteine 126 together coordinate Fe cation.

It belongs to the LuxS family. Homodimer. Fe cation serves as cofactor.

The catalysed reaction is S-(5-deoxy-D-ribos-5-yl)-L-homocysteine = (S)-4,5-dihydroxypentane-2,3-dione + L-homocysteine. Involved in the synthesis of autoinducer 2 (AI-2) which is secreted by bacteria and is used to communicate both the cell density and the metabolic potential of the environment. The regulation of gene expression in response to changes in cell density is called quorum sensing. Catalyzes the transformation of S-ribosylhomocysteine (RHC) to homocysteine (HC) and 4,5-dihydroxy-2,3-pentadione (DPD). The chain is S-ribosylhomocysteine lyase from Bacillus anthracis (strain A0248).